We begin with the raw amino-acid sequence, 305 residues long: MIVRQLWCSRGSTSHLCAAVRLNWRSPKMTRPSSDLTAFREHFAKAKHIAIITGAGVSAESGVPTFRGPGGFWRKWQAQDLATPEAFSRDPSLVWEFYHYRREVMRSKMPNPAHLAIAECEARLGQQGRSVVIITQNIDELHHRAGSKHVYEIHGSLFKTRCMSCGEVKANHKSPICPALDGKGAPDPNTKEARIPVELLPRCERKSCNGLLRPHVVWFGETLDSDILTAVERELEKCDLCLVVGTSSIVYPAAMFAPQVASRGVPVAEFNMECTPATQRFKYHFEGPCGSTLPPALERHESEAV.

A mitochondrion-targeting transit peptide spans 1–32; sequence MIVRQLWCSRGSTSHLCAAVRLNWRSPKMTRP. A Deacetylase sirtuin-type domain is found at 33 to 303; that stretch reads SSDLTAFREH…PPALERHESE (271 aa). NAD(+) is bound at residue 54–73; sequence GAGVSAESGVPTFRGPGGFW. Residues Y98 and R101 each contribute to the substrate site. Residue 136–139 participates in NAD(+) binding; that stretch reads QNID. Residue H154 is the Proton acceptor of the active site. Zn(2+)-binding residues include C162, C165, C203, and C208. Residues 245–247, 271–273, and C289 each bind NAD(+); these read GTS and NME.

The protein belongs to the sirtuin family. Class III subfamily. Requires Zn(2+) as cofactor.

The protein localises to the mitochondrion. It localises to the cytoplasm. The protein resides in the cytosol. Its subcellular location is the nucleus. It catalyses the reaction N(6)-malonyl-L-lysyl-[protein] + NAD(+) + H2O = 2''-O-malonyl-ADP-D-ribose + nicotinamide + L-lysyl-[protein]. The catalysed reaction is N(6)-succinyl-L-lysyl-[protein] + NAD(+) + H2O = 2''-O-succinyl-ADP-D-ribose + nicotinamide + L-lysyl-[protein]. It carries out the reaction N(6)-glutaryl-L-lysyl-[protein] + NAD(+) + H2O = 2''-O-glutaryl-ADP-D-ribose + nicotinamide + L-lysyl-[protein]. Its function is as follows. NAD-dependent lysine demalonylase, desuccinylase and deglutarylase that specifically removes malonyl, succinyl and glutaryl groups on target proteins. Has weak NAD-dependent protein deacetylase activity; however this activity may not be physiologically relevant in vivo. This Danio rerio (Zebrafish) protein is NAD-dependent protein deacylase sirtuin-5, mitochondrial (sirt5).